The sequence spans 281 residues: Pantothenate synthetase (281 aa).

An ATP-binding site is contributed by 30-37 (MGNLHQGH). Catalysis depends on H37, which acts as the Proton donor. Q61 lines the (R)-pantoate pocket. Residue Q61 participates in beta-alanine binding. 148–151 (GQKD) provides a ligand contact to ATP. A (R)-pantoate-binding site is contributed by Q154. ATP is bound by residues A177 and 185-188 (LSSR).

Belongs to the pantothenate synthetase family. In terms of assembly, homodimer.

Its subcellular location is the cytoplasm. It catalyses the reaction (R)-pantoate + beta-alanine + ATP = (R)-pantothenate + AMP + diphosphate + H(+). Its pathway is cofactor biosynthesis; (R)-pantothenate biosynthesis; (R)-pantothenate from (R)-pantoate and beta-alanine: step 1/1. Catalyzes the condensation of pantoate with beta-alanine in an ATP-dependent reaction via a pantoyl-adenylate intermediate. This is Pantothenate synthetase from Acinetobacter baylyi (strain ATCC 33305 / BD413 / ADP1).